Here is a 337-residue protein sequence, read N- to C-terminus: GTPase Obg (337 aa).

An Obg domain is found at 1 to 158; sequence MFVDRVIIEL…HHIELELKLI (158 aa). The 172-residue stretch at 159–330 folds into the OBG-type G domain; sequence ADVGLVGFPN…LIEKMTQRLS (172 aa). Residues 165-172, 190-194, 212-215, 282-285, and 311-313 each bind GTP; these read GFPNAGKS, FTTLQ, DIPG, NKID, and SAV. Serine 172 and threonine 192 together coordinate Mg(2+).

Belongs to the TRAFAC class OBG-HflX-like GTPase superfamily. OBG GTPase family. As to quaternary structure, monomer. It depends on Mg(2+) as a cofactor.

The protein resides in the cytoplasm. Functionally, an essential GTPase which binds GTP, GDP and possibly (p)ppGpp with moderate affinity, with high nucleotide exchange rates and a fairly low GTP hydrolysis rate. Plays a role in control of the cell cycle, stress response, ribosome biogenesis and in those bacteria that undergo differentiation, in morphogenesis control. The protein is GTPase Obg of Protochlamydia amoebophila (strain UWE25).